Reading from the N-terminus, the 432-residue chain is Cytochrome c biogenesis protein CcsB (432 aa).

A run of 3 helical transmembrane segments spans residues 18-38, 76-96, and 166-186; these read LRLA…GTGI, SGWF…CSWR, and VGPL…AWGA.

The protein belongs to the Ccs1/CcsB family. As to quaternary structure, may interact with CcsA.

It localises to the cellular thylakoid membrane. In terms of biological role, required during biogenesis of c-type cytochromes (cytochrome c6 and cytochrome f) at the step of heme attachment. In Synechococcus sp. (strain CC9605), this protein is Cytochrome c biogenesis protein CcsB.